Here is a 255-residue protein sequence, read N- to C-terminus: DASH complex subunit SPC34 (255 aa).

The disordered stretch occupies residues 53–81 (LFSVPPPPPRQTTLTAEQQQQQKPSNRRQ). Residues 63 to 81 (QTTLTAEQQQQQKPSNRRQ) are compositionally biased toward polar residues. Residues 176-248 (LAYYEAKIAE…QARLRALDAD (73 aa)) adopt a coiled-coil conformation.

This sequence belongs to the DASH complex SPC34 family. Component of the DASH complex consisting of ASK1, DAD1, DAD2, DAD3, DAD4, DAM1, DUO1, HSK3, SPC19 and SPC34, with a stoichiometry of one copy of each subunit per complex. Multiple DASH complexes oligomerize to form a ring that encircles spindle microtubules and organizes the rod-like NDC80 complexes of the outer kinetochore of the outer kinetochore. DASH complex oligomerization strengthens microtubule attachments. On cytoplasmic microtubules, DASH complexes appear to form patches instead of rings.

It localises to the nucleus. Its subcellular location is the cytoplasm. The protein localises to the cytoskeleton. It is found in the spindle. The protein resides in the chromosome. It localises to the centromere. Its subcellular location is the kinetochore. Its function is as follows. Component of the DASH complex that connects microtubules with kinetochores and couples microtubule depolymerisation to chromosome movement; it is involved in retrieving kinetochores to the spindle poles before their re-orientation on the spindle in early mitosis and allows microtubule depolymerization to pull chromosomes apart and resist detachment during anaphase. Kinetochores, consisting of a centromere-associated inner segment and a microtubule-contacting outer segment, play a crucial role in chromosome segregation by mediating the physical connection between centromeric DNA and microtubules. Kinetochores also serve as an input point for the spindle assembly checkpoint, which delays anaphase until all chromosomes have bioriented on the mitotic spindle. The protein is DASH complex subunit SPC34 of Chaetomium thermophilum (strain DSM 1495 / CBS 144.50 / IMI 039719) (Thermochaetoides thermophila).